Consider the following 292-residue polypeptide: Probable alpha-L-glutamate ligase (292 aa).

One can recognise an ATP-grasp domain in the interval 104 to 287 (HQLLAAKGID…VATRIIEHVE (184 aa)). Residues lysine 141, 178 to 179 (EF), aspartate 187, and 211 to 213 (RSN) contribute to the ATP site. Aspartate 248, glutamate 260, and asparagine 262 together coordinate Mg(2+). Residues aspartate 248, glutamate 260, and asparagine 262 each contribute to the Mn(2+) site.

The protein belongs to the RimK family. Requires Mg(2+) as cofactor. Mn(2+) is required as a cofactor.

The polypeptide is Probable alpha-L-glutamate ligase (Stenotrophomonas maltophilia (strain R551-3)).